Here is a 608-residue protein sequence, read N- to C-terminus: Cytoplasmic dynein 1 intermediate chain 1 (608 aa).

2 stretches are compositionally biased toward basic and acidic residues: residues 1 to 13 (MSDKSDLKAELER) and 20 to 60 (QIRE…RETE). Residues 1 to 106 (MSDKSDLKAE…SGDLGPLTRR (106 aa)) form a disordered region. Ser-2 carries the post-translational modification N-acetylserine. Ser-50 carries the phosphoserine modification. The span at 70–79 (PEPPLVPTPM) shows a compositional bias: pro residues. A compositionally biased stretch (low complexity) spans 80–90 (SPSSKSVSTPS). Ser-83 carries the post-translational modification Phosphoserine. At Thr-88 the chain carries Phosphothreonine. A phosphoserine mark is found at Ser-90, Ser-94, and Ser-97. The segment at 110 to 126 (KLGVSKITQVDFLPREV) is interaction with DYNLT1. The disordered stretch occupies residues 132 to 184 (ETQTPLATHQSEEDEDDEEMVEPKGDQDSEQENEDKKQEVKEAPPRELTEEEK). A Phosphothreonine modification is found at Thr-139. Phosphoserine is present on residues Ser-142 and Ser-160. Basic and acidic residues predominate over residues 165–184 (EDKKQEVKEAPPRELTEEEK). WD repeat units follow at residues 248 to 297 (SKHR…TTPE), 301 to 341 (HCQS…RTPV), 350 to 391 (AHTH…TPQE), 400 to 440 (SKPV…AGIG), 445 to 490 (GHQG…PLYS), 493 to 533 (DNAD…EVPT), and 539 to 578 (EGASALNRVRWAQGGKEVAVGDSEGRIWIYDVGELAVPHN). A Phosphoserine modification is found at Ser-598.

The protein belongs to the dynein intermediate chain family. As to quaternary structure, homodimer. The cytoplasmic dynein 1 complex consists of two catalytic heavy chains (HCs) and a number of non-catalytic subunits presented by intermediate chains (ICs), light intermediate chains (LICs) and light chains (LCs); the composition seems to vary in respect to the IC, LIC and LC composition. The heavy chain homodimer serves as a scaffold for the probable homodimeric assembly of the respective non-catalytic subunits. The ICs and LICs bind directly to the HC dimer and the LCs assemble on the IC dimer. Interacts with DYNC1H1. Interacts with DYNLT1 and DYNLT3. Interacts with DCTN1. Interacts with MCRS1; the interaction is required for the proper distribution of centriolar satellites.

The protein localises to the cytoplasm. It localises to the chromosome. It is found in the centromere. The protein resides in the kinetochore. Its subcellular location is the cytoskeleton. The protein localises to the spindle pole. Functionally, acts as one of several non-catalytic accessory components of the cytoplasmic dynein 1 complex that are thought to be involved in linking dynein to cargos and to adapter proteins that regulate dynein function. Cytoplasmic dynein 1 acts as a motor for the intracellular retrograde motility of vesicles and organelles along microtubules. The intermediate chains mediate the binding of dynein to dynactin via its 150 kDa component (p150-glued) DCTN1. May play a role in mediating the interaction of cytoplasmic dynein with membranous organelles and kinetochores. In Bos taurus (Bovine), this protein is Cytoplasmic dynein 1 intermediate chain 1 (DYNC1I1).